Reading from the N-terminus, the 238-residue chain is Lactate utilization protein A (238 aa).

This sequence belongs to the LutA/YkgE family.

In terms of biological role, is involved in L-lactate degradation and allows cells to grow with lactate as the sole carbon source. In Bacillus velezensis (strain DSM 23117 / BGSC 10A6 / LMG 26770 / FZB42) (Bacillus amyloliquefaciens subsp. plantarum), this protein is Lactate utilization protein A.